The chain runs to 198 residues: MAASLVGKKIVFVTGNAKKLEEVIQILGDKFPCTLVAQKIDLPEYQGEPDEISIQKCQEAARQVQGPVLVEDTCLCFNALGGLPGPYIKWFLQKLKPEGLYQLLAGFEDKSAYALCTFALSTGDPSQPVLLFRGKTPGQIVMPRGSRDFGWDPCFQPDGYEQTYAEMPKAEKNTISHRFRALFKLQEYFGVTDGAGDH.

Position 2 is an N-acetylalanine (A2). An ITP-binding site is contributed by 14 to 19 (TGNAKK). E44 is a binding site for Mg(2+). Residues K56, 72 to 73 (DT), and K89 contribute to the ITP site. At S146 the chain carries Phosphoserine. ITP is bound by residues 149-152 (FGWD), K172, and 177-178 (HR).

Belongs to the HAM1 NTPase family. As to quaternary structure, homodimer. The cofactor is Mg(2+). It depends on Mn(2+) as a cofactor.

It localises to the cytoplasm. It carries out the reaction ITP + H2O = IMP + diphosphate + H(+). The catalysed reaction is dITP + H2O = dIMP + diphosphate + H(+). It catalyses the reaction XTP + H2O = XMP + diphosphate + H(+). The enzyme catalyses N(6)-hydroxy-dATP + H2O = N(6)-hydroxy-dAMP + diphosphate + H(+). Functionally, pyrophosphatase that hydrolyzes the non-canonical purine nucleotides inosine triphosphate (ITP), deoxyinosine triphosphate (dITP) as well as 2'-deoxy-N-6-hydroxylaminopurine triphosphate (dHAPTP) and xanthosine 5'-triphosphate (XTP) to their respective monophosphate derivatives. The enzyme does not distinguish between the deoxy- and ribose forms. Probably excludes non-canonical purines from RNA and DNA precursor pools, thus preventing their incorporation into RNA and DNA and avoiding chromosomal lesions. The chain is Inosine triphosphate pyrophosphatase (Itpa) from Rattus norvegicus (Rat).